Here is a 210-residue protein sequence, read N- to C-terminus: MDKKKNISMAVIRRLPKYHRYLYELLKNDVDRISSKELSEKIGFTASQIRQDLNCFGDFGQQGYGYNVSELHHQISNILGLNNPYNIIIIGAGNIGQALANYTRFSKLGFNVKTMFDTNPKLIGLKIREIEILDIDYLSSYLEKNNIDIGIICVPHDNAQKVANILVKNDIKGIWNFAPIDLSVPEDVVVENVHLSDSLLTLTCLINKTE.

Positions 17–56 form a DNA-binding region, H-T-H motif; it reads KYHRYLYELLKNDVDRISSKELSEKIGFTASQIRQDLNCF. 91–96 is a binding site for NAD(+); it reads GAGNIG.

The protein belongs to the transcriptional regulatory Rex family. In terms of assembly, homodimer.

Its subcellular location is the cytoplasm. Functionally, modulates transcription in response to changes in cellular NADH/NAD(+) redox state. The sequence is that of Redox-sensing transcriptional repressor Rex from Clostridium botulinum (strain Loch Maree / Type A3).